The chain runs to 554 residues: Potassium/proton antiporter CemA (554 aa).

A helical membrane pass occupies residues 50–70 (SLFVVLFIPFFINIFTKIYVF). Residues 113–410 (KTENFFPEKP…VPYNFNKNTE (298 aa)) are insert. Transmembrane regions (helical) follow at residues 429 to 449 (ISAITNLLADFMGLFILLFLL), 479 to 499 (MLLFTDLLVGFHSPRGWEVIF), and 514 to 534 (IIFLLVGTFPVLLDALFKYWI).

Belongs to the CemA family.

It localises to the plastid. The protein resides in the chloroplast inner membrane. The enzyme catalyses K(+)(in) + H(+)(out) = K(+)(out) + H(+)(in). Contributes to K(+)/H(+) antiport activity by supporting proton efflux to control proton extrusion and homeostasis in chloroplasts in a light-dependent manner to modulate photosynthesis. Prevents excessive induction of non-photochemical quenching (NPQ) under continuous-light conditions. Indirectly promotes efficient inorganic carbon uptake into chloroplasts. This is Potassium/proton antiporter CemA from Stigeoclonium helveticum (Green alga).